We begin with the raw amino-acid sequence, 292 residues long: Bifunctional protein FolD (292 aa).

NADP(+) contacts are provided by residues 166-168 (GRS), serine 191, and isoleucine 232.

This sequence belongs to the tetrahydrofolate dehydrogenase/cyclohydrolase family. Homodimer.

It catalyses the reaction (6R)-5,10-methylene-5,6,7,8-tetrahydrofolate + NADP(+) = (6R)-5,10-methenyltetrahydrofolate + NADPH. The enzyme catalyses (6R)-5,10-methenyltetrahydrofolate + H2O = (6R)-10-formyltetrahydrofolate + H(+). It participates in one-carbon metabolism; tetrahydrofolate interconversion. Functionally, catalyzes the oxidation of 5,10-methylenetetrahydrofolate to 5,10-methenyltetrahydrofolate and then the hydrolysis of 5,10-methenyltetrahydrofolate to 10-formyltetrahydrofolate. In Wolbachia sp. subsp. Drosophila simulans (strain wRi), this protein is Bifunctional protein FolD.